Reading from the N-terminus, the 175-residue chain is Nucleoside triphosphate/diphosphate phosphatase (175 aa).

Arg-23 serves as the catalytic Proton donor. Residues Asn-87, Asp-103, Asp-105, Asp-107, Asp-120, and Glu-123 each coordinate Mg(2+).

Belongs to the Ntdp family. It depends on Mg(2+) as a cofactor.

It carries out the reaction a ribonucleoside 5'-triphosphate + H2O = a ribonucleoside 5'-diphosphate + phosphate + H(+). The catalysed reaction is a ribonucleoside 5'-diphosphate + H2O = a ribonucleoside 5'-phosphate + phosphate + H(+). In terms of biological role, has nucleoside phosphatase activity towards nucleoside triphosphates and nucleoside diphosphates. The sequence is that of Nucleoside triphosphate/diphosphate phosphatase from Oceanobacillus iheyensis (strain DSM 14371 / CIP 107618 / JCM 11309 / KCTC 3954 / HTE831).